A 371-amino-acid chain; its full sequence is NDMA-dependent alcohol dehydrogenase (371 aa).

Residues C40, H61, C91, C94, C97, C105, and C167 each contribute to the Zn(2+) site.

Belongs to the zinc-containing alcohol dehydrogenase family. Homotrimer. It depends on NADH as a cofactor.

The catalysed reaction is N,N-dimethyl-4-nitrosoaniline + a primary alcohol = 4-(hydroxylamino)-N,N-dimethylaniline + an aldehyde. It catalyses the reaction ethanol + A = acetaldehyde + AH2. Its activity is regulated as follows. Inhibited by trans-4-(N,N-dimethylamino)-cinnamaldehyde through direct binding to the catalytic zinc ion in a substrate-like geometry. Isobutyramide acts as a competitive inhibitor with respect to the electron acceptor NDMA. Acetaldehyde, AMP, ADP, ATP, as well as CuSO(4), FeSO(4), HgCl(2), NiCl(2), ZnSO(4), KCN, and NaN(3) are additional inhibitors of the catalytic activity. Its function is as follows. Catalytically different from common alcohol dehydrogenases. Effective in oxidizing ethanol, other primary alcohols and benzylalcohol only in the presence of p-nitroso-N,N-dimethylaniline (NDMA) as an electron acceptor. NADH acts as a cofactor here instead as a coenzyme. The protein is NDMA-dependent alcohol dehydrogenase of Amycolatopsis methanolica.